The chain runs to 256 residues: Type III pantothenate kinase (256 aa).

An ATP-binding site is contributed by 6–13 (DIGNSSIV). Residues tyrosine 101 and 108-111 (GADR) contribute to the substrate site. Catalysis depends on aspartate 110, which acts as the Proton acceptor. Residue aspartate 130 participates in K(+) binding. Threonine 133 contributes to the ATP binding site. Threonine 185 is a binding site for substrate.

It belongs to the type III pantothenate kinase family. In terms of assembly, homodimer. Requires NH4(+) as cofactor. The cofactor is K(+).

Its subcellular location is the cytoplasm. The enzyme catalyses (R)-pantothenate + ATP = (R)-4'-phosphopantothenate + ADP + H(+). Its pathway is cofactor biosynthesis; coenzyme A biosynthesis; CoA from (R)-pantothenate: step 1/5. Catalyzes the phosphorylation of pantothenate (Pan), the first step in CoA biosynthesis. The sequence is that of Type III pantothenate kinase from Shouchella clausii (strain KSM-K16) (Alkalihalobacillus clausii).